The chain runs to 350 residues: tRNA N6-adenosine threonylcarbamoyltransferase (350 aa).

Positions 109 and 113 each coordinate Fe cation. Substrate is bound by residues 136–140 (TVSGG), D169, G182, D186, and N284. D312 is a Fe cation binding site.

The protein belongs to the KAE1 / TsaD family. The cofactor is Fe(2+).

It localises to the cytoplasm. It catalyses the reaction L-threonylcarbamoyladenylate + adenosine(37) in tRNA = N(6)-L-threonylcarbamoyladenosine(37) in tRNA + AMP + H(+). Its function is as follows. Required for the formation of a threonylcarbamoyl group on adenosine at position 37 (t(6)A37) in tRNAs that read codons beginning with adenine. Is involved in the transfer of the threonylcarbamoyl moiety of threonylcarbamoyl-AMP (TC-AMP) to the N6 group of A37, together with TsaE and TsaB. TsaD likely plays a direct catalytic role in this reaction. This is tRNA N6-adenosine threonylcarbamoyltransferase from Pelodictyon phaeoclathratiforme (strain DSM 5477 / BU-1).